Here is a 503-residue protein sequence, read N- to C-terminus: MNPPAYTSTSGSVASTGNCAICMSAISGLGKTLPCLHDFCFVCIQTWTSTSAQCPLCRTVVSSILHNITSDANYEEYEVIFDDEGYNEDAPLQIPEEPGVNVSPQPPVHSTANSASNTALMRSHAQPRVLAPDNSSVFQPSTSSHASFSSGFAPYSQTPPVGASNLEATRVSRSAVITPTTSTGPRLHLSPSSRSVSQRLQTLFGITKLPGVPTEPPAYAQAEAHFGQANGYGQHRGALHGSYPAVLTAQDTSQIPTRLPFRATDRDVMEVLNSHVICSLCWVGWDEQLATLFPPPIVEPTKTLILNYIAIYGVEDVKLKVSLRCLLHDLTVPFVENMLFLIDRCTDPTRISMQAWTWHDTPIRLLSGPIKSPDGGSTSQDTSVSNIHRSPPGGSSTQPSSGRRPGRPKGVKRRLFVDDDTGVSTNESVFPVINAPIHHKNSKLAALPTGSTTDSNERLVVESPGASAEQPSTSGSSPSPSRRRGRKQGIARIEMLTKKVRRK.

An RING-type zinc finger spans residues 19–58 (CAICMSAISGLGKTLPCLHDFCFVCIQTWTSTSAQCPLCR). Disordered stretches follow at residues 175–194 (AVITPTTSTGPRLHLSPSSR), 367–418 (SGPI…LFVD), and 445–503 (AALP…VRRK). Residues 375-388 (GGSTSQDTSVSNIH) show a composition bias toward polar residues. Residues 389 to 403 (RSPPGGSSTQPSSGR) are compositionally biased toward low complexity. The segment covering 404–414 (RPGRPKGVKRR) has biased composition (basic residues). The span at 471 to 480 (PSTSGSSPSP) shows a compositional bias: low complexity.

In terms of assembly, interacts with host BTRC; this interaction seems to inactivate SCF-mediated protein degradation in general.

It catalyses the reaction S-ubiquitinyl-[E2 ubiquitin-conjugating enzyme]-L-cysteine + [acceptor protein]-L-lysine = [E2 ubiquitin-conjugating enzyme]-L-cysteine + N(6)-ubiquitinyl-[acceptor protein]-L-lysine.. Its function is as follows. RING-finger E3 ubiquitin ligase that degrades host SP100, one of the major components of ND10 nuclear bodies, thereby disrupting the organization of these bodies. Also plays a role in the inhibition of host NF-kappa-B pathway by blocking the SCF(BTRC)-mediated addition of ubiquitin chains to host IkappaBalpha/NFKBIA, thereby interfering with its degradation. The chain is E3 ubiquitin-protein ligase IE61 from Cercopithecine herpesvirus 9 (strain DHV) (CeHV-9).